A 229-amino-acid polypeptide reads, in one-letter code: 5'-methylthioadenosine/S-adenosylhomocysteine nucleosidase (229 aa).

E12 acts as the Proton acceptor in catalysis. Residues G78, I152, and 173–174 (ME) contribute to the substrate site. D197 serves as the catalytic Proton donor.

It belongs to the PNP/UDP phosphorylase family. MtnN subfamily.

The enzyme catalyses S-adenosyl-L-homocysteine + H2O = S-(5-deoxy-D-ribos-5-yl)-L-homocysteine + adenine. The catalysed reaction is S-methyl-5'-thioadenosine + H2O = 5-(methylsulfanyl)-D-ribose + adenine. It catalyses the reaction 5'-deoxyadenosine + H2O = 5-deoxy-D-ribose + adenine. The protein operates within amino-acid biosynthesis; L-methionine biosynthesis via salvage pathway; S-methyl-5-thio-alpha-D-ribose 1-phosphate from S-methyl-5'-thioadenosine (hydrolase route): step 1/2. Its function is as follows. Catalyzes the irreversible cleavage of the glycosidic bond in both 5'-methylthioadenosine (MTA) and S-adenosylhomocysteine (SAH/AdoHcy) to adenine and the corresponding thioribose, 5'-methylthioribose and S-ribosylhomocysteine, respectively. Also cleaves 5'-deoxyadenosine, a toxic by-product of radical S-adenosylmethionine (SAM) enzymes, into 5-deoxyribose and adenine. In Haemophilus influenzae (strain PittGG), this protein is 5'-methylthioadenosine/S-adenosylhomocysteine nucleosidase.